The following is a 400-amino-acid chain: 3-phenylpropionate/cinnamic acid dioxygenase ferredoxin--NAD(+) reductase component (400 aa).

5 to 36 (TIIIVGGGQAAAMAAASLRQQGFTGELHLFSD) is an FAD binding site. 146 to 174 (SVVIVGAGTIGLELAASATQRRCKVTVIE) serves as a coordination point for NAD(+).

It belongs to the bacterial ring-hydroxylating dioxygenase ferredoxin reductase family. In terms of assembly, this dioxygenase system consists of four proteins: the two subunits of the hydroxylase component (HcaE and HcaF), a ferredoxin (HcaC) and a ferredoxin reductase (HcaD). FAD serves as cofactor.

The catalysed reaction is 2 reduced [2Fe-2S]-[ferredoxin] + NAD(+) + H(+) = 2 oxidized [2Fe-2S]-[ferredoxin] + NADH. The protein operates within aromatic compound metabolism; 3-phenylpropanoate degradation. Functionally, part of the multicomponent 3-phenylpropionate dioxygenase, that converts 3-phenylpropionic acid (PP) and cinnamic acid (CI) into 3-phenylpropionate-dihydrodiol (PP-dihydrodiol) and cinnamic acid-dihydrodiol (CI-dihydrodiol), respectively. The polypeptide is 3-phenylpropionate/cinnamic acid dioxygenase ferredoxin--NAD(+) reductase component (Shigella sonnei (strain Ss046)).